The sequence spans 312 residues: Glyoxylate/hydroxypyruvate reductase A (312 aa).

The active site involves arginine 227. The Proton donor role is filled by histidine 275.

Belongs to the D-isomer specific 2-hydroxyacid dehydrogenase family. GhrA subfamily.

It is found in the cytoplasm. The enzyme catalyses glycolate + NADP(+) = glyoxylate + NADPH + H(+). The catalysed reaction is (R)-glycerate + NAD(+) = 3-hydroxypyruvate + NADH + H(+). It catalyses the reaction (R)-glycerate + NADP(+) = 3-hydroxypyruvate + NADPH + H(+). Its function is as follows. Catalyzes the NADPH-dependent reduction of glyoxylate and hydroxypyruvate into glycolate and glycerate, respectively. In Escherichia coli O81 (strain ED1a), this protein is Glyoxylate/hydroxypyruvate reductase A.